A 136-amino-acid polypeptide reads, in one-letter code: Large ribosomal subunit protein bL21 (136 aa).

Positions 107–136 (RAAADRKTAPKRASAKAAADQTTAAQATAE) are disordered. Over residues 121–136 (AKAAADQTTAAQATAE) the composition is skewed to low complexity.

The protein belongs to the bacterial ribosomal protein bL21 family. As to quaternary structure, part of the 50S ribosomal subunit. Contacts protein L20.

Its function is as follows. This protein binds to 23S rRNA in the presence of protein L20. This chain is Large ribosomal subunit protein bL21, found in Acidothermus cellulolyticus (strain ATCC 43068 / DSM 8971 / 11B).